A 367-amino-acid chain; its full sequence is Glutamate 5-kinase (367 aa).

Lys-17 is an ATP binding site. Substrate contacts are provided by Ser-57, Asp-144, and Asn-156. ATP contacts are provided by residues 176–177 (SD) and 217–223 (TGGMTSK). Residues 279 to 357 (AGALTLDEGA…SELPGELRRP (79 aa)) form the PUA domain.

Belongs to the glutamate 5-kinase family.

It is found in the cytoplasm. The enzyme catalyses L-glutamate + ATP = L-glutamyl 5-phosphate + ADP. It participates in amino-acid biosynthesis; L-proline biosynthesis; L-glutamate 5-semialdehyde from L-glutamate: step 1/2. Its function is as follows. Catalyzes the transfer of a phosphate group to glutamate to form L-glutamate 5-phosphate. In Mycobacterium avium (strain 104), this protein is Glutamate 5-kinase.